A 233-amino-acid chain; its full sequence is Fibroblast growth factor 8 (233 aa).

Residues 1–22 form the signal peptide; that stretch reads MGSPRSALSCLLLHLLVLCLQA. Asn155 is a glycosylation site (N-linked (GlcNAc...) asparagine).

Belongs to the heparin-binding growth factors family. In terms of assembly, monomer. Homodimer. Interacts with FGFR1, FGFR2, FGFR3 and FGFR4. Affinity between fibroblast growth factors (FGFs) and their receptors is increased by heparan sulfate glycosaminoglycans that function as coreceptors.

It localises to the secreted. Plays an important role in the regulation of embryonic development, cell proliferation, cell differentiation and cell migration. Required for normal brain, eye, ear and limb development during embryogenesis. Required for normal development of the gonadotropin-releasing hormone (GnRH) neuronal system. Plays a role in neurite outgrowth in hippocampal cells. This chain is Fibroblast growth factor 8 (FGF8), found in Homo sapiens (Human).